The sequence spans 342 residues: tRNA dimethylallyltransferase (342 aa).

The disordered stretch occupies residues 1 to 30 (MSANGPAAEPADGGRAVPAGGGEAVPAGGG). Over residues 19 to 30 (AGGGEAVPAGGG) the composition is skewed to gly residues. An ATP-binding site is contributed by 49–56 (GPTAAGKS). 51–56 (TAAGKS) contributes to the substrate binding site. An interaction with substrate tRNA region spans residues 74–77 (DSMQ).

It belongs to the IPP transferase family. Monomer. The cofactor is Mg(2+).

The catalysed reaction is adenosine(37) in tRNA + dimethylallyl diphosphate = N(6)-dimethylallyladenosine(37) in tRNA + diphosphate. Catalyzes the transfer of a dimethylallyl group onto the adenine at position 37 in tRNAs that read codons beginning with uridine, leading to the formation of N6-(dimethylallyl)adenosine (i(6)A). The sequence is that of tRNA dimethylallyltransferase from Salinispora arenicola (strain CNS-205).